A 1016-amino-acid polypeptide reads, in one-letter code: UvrABC system protein A (1016 aa).

32 to 39 (GVSGSGKS) is a binding site for ATP. The C4-type zinc finger occupies 259 to 286 (CPEHGSVLEELEPRSFSFNSPYGACGDC). 2 ABC transporter domains span residues 315 to 627 (WTKK…KNSL) and 647 to 975 (GNGK…EYLR). 679 to 686 (GPSGSGKS) is a binding site for ATP. Residues 778 to 804 (CEHCKGDGVMKIEMNFLPDIYVPCEVC) form a C4-type zinc finger. Residues 984–1016 (EPRARGEKAEKPAKAKAPAKKRTKKQTELVEAD) form a disordered region. Residues 985–996 (PRARGEKAEKPA) are compositionally biased toward basic and acidic residues.

Belongs to the ABC transporter superfamily. UvrA family. As to quaternary structure, forms a heterotetramer with UvrB during the search for lesions.

It localises to the cytoplasm. The UvrABC repair system catalyzes the recognition and processing of DNA lesions. UvrA is an ATPase and a DNA-binding protein. A damage recognition complex composed of 2 UvrA and 2 UvrB subunits scans DNA for abnormalities. When the presence of a lesion has been verified by UvrB, the UvrA molecules dissociate. In Deinococcus radiodurans (strain ATCC 13939 / DSM 20539 / JCM 16871 / CCUG 27074 / LMG 4051 / NBRC 15346 / NCIMB 9279 / VKM B-1422 / R1), this protein is UvrABC system protein A.